The primary structure comprises 354 residues: MASAREPTEDEIAKFLATRTSSQILQLMRCIREPAAQFAFTAKLLTFNSVKSAKPTVPPKAKKALNAFVGFRCYYIAIPAFKQWPMKKLSNLISLLWDRDPNKSLWSLMAKAWSNIRDQVGKDQAPLDEFFDIICSHLKLPDPASYLDLHGWILIVNDQGDPTLVESIDSKSASVGSSHIDLALSVEDIIAFVRNAGYAPTYIPNDNITSPTFLGQLANSPALEEDQAVAEEYDTPMADTSSASEFQQSLQREMAITEAAASVVGPDPLPDFDFTPFYESVNNLIVEHMAMEQANAGYTQGTQLSNHLVVDSGKAYLGMNDFVVDLPELIDYDAFHFGGNEDVTLPMFDDITYY.

Positions 60-117 (KAKKALNAFVGFRCYYIAIPAFKQWPMKKLSNLISLLWDRDPNKSLWSLMAKAWSNIR) form a DNA-binding region, alpha box.

Belongs to the MATALPHA1 family.

The protein localises to the nucleus. Mating type proteins are sequence specific DNA-binding proteins that act as master switches in fungal differentiation by controlling gene expression in a cell type-specific fashion. Transcriptional activator that induces the transcription of alpha-specific genes. In Cochliobolus cymbopogonis (Curvularia cymbopogonis), this protein is Mating-type protein MAT-1 (MAT1).